The sequence spans 296 residues: tRNA dimethylallyltransferase (296 aa).

10–17 (GPTASGKT) is an ATP binding site. Residue 12–17 (TASGKT) coordinates substrate. Positions 35-38 (DSRQ) are interaction with substrate tRNA.

This sequence belongs to the IPP transferase family. In terms of assembly, monomer. It depends on Mg(2+) as a cofactor.

The enzyme catalyses adenosine(37) in tRNA + dimethylallyl diphosphate = N(6)-dimethylallyladenosine(37) in tRNA + diphosphate. Its function is as follows. Catalyzes the transfer of a dimethylallyl group onto the adenine at position 37 in tRNAs that read codons beginning with uridine, leading to the formation of N6-(dimethylallyl)adenosine (i(6)A). The chain is tRNA dimethylallyltransferase from Synechococcus sp. (strain RCC307).